A 693-amino-acid chain; its full sequence is Protein-glutamine gamma-glutamyltransferase E (693 aa).

Phosphotyrosine is present on Tyr111. At Thr112 the chain carries Phosphothreonine. Ca(2+)-binding residues include Ala222, Asn225, Asn227, Asp228, and Asn230. Residue Cys273 is part of the active site. Residues Asp302, Asp304, Asn306, Ser308, and Asp325 each coordinate Ca(2+). Residues His331 and Asp354 contribute to the active site. Residues Asn394, Thr416, Glu444, and Glu449 each coordinate Ca(2+). Residues 457–483 (LDKLKPNASFGATSSRNPEGEDKEPSI) are disordered.

It belongs to the transglutaminase superfamily. Transglutaminase family. Consists of two polypeptide chains, which are synthesized as a precursor form of a single polypeptide. It depends on Ca(2+) as a cofactor. In terms of processing, activated by proteolytic processing. In vitro activation is commonly achieved by cleavage with dispase, a neutral bacterial protease. Physiological activation may be catalyzed by CTSL and, to a lesser extent, by CTSS. In terms of tissue distribution, expressed in skin and stomach and, at lower levels, in testis, kidney and spleen (at protein level). On the basis of its catalytic activity, detected in the epidermis, around the granular and spinous layers but not in the outermost cornified layers. In hair follicles, mainly located in the medulla and the hair cortex.

It is found in the cytoplasm. It catalyses the reaction L-glutaminyl-[protein] + L-lysyl-[protein] = [protein]-L-lysyl-N(6)-5-L-glutamyl-[protein] + NH4(+). Functionally, catalyzes the calcium-dependent formation of isopeptide cross-links between glutamine and lysine residues in various proteins, as well as the conjugation of polyamines to proteins. Involved in the formation of the cornified envelope (CE), a specialized component consisting of covalent cross-links of proteins beneath the plasma membrane of terminally differentiated keratinocytes. Catalyzes small proline-rich proteins (SPRR1 and SPRR2) and LOR cross-linking to form small interchain oligomers, which are further cross-linked by TGM1 onto the growing CE scaffold. In hair follicles, involved in cross-linking structural proteins to hardening the inner root sheath. The protein is Protein-glutamine gamma-glutamyltransferase E (Tgm3) of Mus musculus (Mouse).